We begin with the raw amino-acid sequence, 188 residues long: Large ribosomal subunit protein eL18 (188 aa).

Lysine 119 is covalently cross-linked (Glycyl lysine isopeptide (Lys-Gly) (interchain with G-Cter in SUMO2)). Serine 130 bears the Phosphoserine mark. The interval 151–188 (HFGKAPGTPHSHTKPYVRSKGRKFERARGRRASRGYKN) is disordered. Phosphothreonine is present on threonine 158. Basic residues-rich tracts occupy residues 161 to 171 (SHTKPYVRSKG) and 178 to 188 (RGRRASRGYKN). A Glycyl lysine isopeptide (Lys-Gly) (interchain with G-Cter in SUMO2) cross-link involves residue lysine 164.

The protein belongs to the eukaryotic ribosomal protein eL18 family. As to quaternary structure, component of the large ribosomal subunit.

It localises to the cytoplasm. The protein localises to the cytosol. It is found in the rough endoplasmic reticulum. Functionally, component of the large ribosomal subunit. The ribosome is a large ribonucleoprotein complex responsible for the synthesis of proteins in the cell. The chain is Large ribosomal subunit protein eL18 (RPL18) from Homo sapiens (Human).